A 386-amino-acid chain; its full sequence is Outer membrane protein assembly factor BamB (386 aa).

The first 20 residues, 1 to 20, serve as a signal peptide directing secretion; the sequence is MKKLFNQVLVAAGVLALLAG. C21 carries N-palmitoyl cysteine lipidation. The S-diacylglycerol cysteine moiety is linked to residue C21.

The protein belongs to the BamB family. Part of the Bam complex.

It is found in the cell outer membrane. Functionally, part of the outer membrane protein assembly complex, which is involved in assembly and insertion of beta-barrel proteins into the outer membrane. This is Outer membrane protein assembly factor BamB from Vibrio cholerae serotype O1 (strain ATCC 39315 / El Tor Inaba N16961).